We begin with the raw amino-acid sequence, 272 residues long: HMP-PP phosphatase (272 aa).

Asp-8 functions as the Nucleophile in the catalytic mechanism. Asp-8, Asp-10, and Asp-212 together coordinate Mg(2+).

It belongs to the HAD-like hydrolase superfamily. Cof family. Mg(2+) serves as cofactor.

The catalysed reaction is 4-amino-2-methyl-5-(diphosphooxymethyl)pyrimidine + H2O = 4-amino-2-methyl-5-(phosphooxymethyl)pyrimidine + phosphate + H(+). Functionally, catalyzes the hydrolysis of 4-amino-2-methyl-5-hydroxymethylpyrimidine pyrophosphate (HMP-PP) to 4-amino-2-methyl-5-hydroxymethylpyrimidine phosphate (HMP-P). This is HMP-PP phosphatase from Escherichia coli (strain K12 / MC4100 / BW2952).